The following is an 863-amino-acid chain: Receptor-like protein Cf-9 (863 aa).

The first 21 residues, 1–21, serve as a signal peptide directing secretion; it reads MDCVKLVFLMLYTFLCQLALS. At 22-812 the chain is on the extracellular side; that stretch reads SSLPHLCPED…EEDSPMISWQ (791 aa). Residues 24–91 are N-cap; it reads LPHLCPEDQA…GVHCDETTGQ (68 aa). N48, N72, N109, N127, N142, N191, N204, and N212 each carry an N-linked (GlcNAc...) asparagine glycan. The LRR 1; degenerate repeat unit spans residues 92-115; that stretch reads VIALDLRCSQLQGKFHSNSSLFQL. LRR repeat units follow at residues 116 to 139 and 141 to 164; these read SNLK…KFGE and SNLT…ICHL. The stretch at 165–191 is one LRR 4; degenerate repeat; that stretch reads SKLHVLRICDQYGLSLVPYNFELLLKN. LRR repeat units follow at residues 192–214, 215–238, 241–263, 265–287, 288–312, 314–335, 336–358, 359–382, 383–406, 408–428, 429–452, 454–476, 477–500, 502–524, 525–549, 551–572, 573–597, 599–623, 667–690, 691–714, 715–739, and 741–759; these read LTQL…SNFS, SHLT…VFHL, LQSL…KWNS, ASLM…SFSH, LTSL…LWNL, NIVF…FTIF, EKLK…LSFN, TQLE…ISGL, QNLE…IFSL, SLVE…EFKS, KTLS…LLNQ, NLQL…ICNL, KTLI…VVER, EYLS…TFSV, GNIL…MINC, YLTL…WLGY, LFQL…GNTN, FMGL…ILGN, LDSN…IIGD, LVGL…SFQN, LSVL…LASL, and FLEV…IPKG. N262 carries N-linked (GlcNAc...) asparagine glycosylation. N-linked (GlcNAc...) asparagine glycans are attached at residues N300 and N311. N378, N396, and N416 each carry an N-linked (GlcNAc...) asparagine glycan. N-linked (GlcNAc...) asparagine glycosylation occurs at N464. N519 carries an N-linked (GlcNAc...) asparagine glycan. N-linked (GlcNAc...) asparagine glycosylation is present at N563. Residues N698 and N714 are each glycosylated (N-linked (GlcNAc...) asparagine). N-linked (GlcNAc...) asparagine glycosylation is found at N746 and N767. Residues 760-812 form a C-cap/acidic domain region; sequence KQFDSFGNTSYQGNDGLRGFPLSKLCGGEDQVTTPAELDQEEEEEDSPMISWQ. Residues 813–833 form a helical membrane-spanning segment; that stretch reads GVLVGYGCGLVIGLSVIYIMW. The Cytoplasmic portion of the chain corresponds to 834–863; the sequence is STQYPAWFSRMDLKLEHIITTKMKKHKKRY.

It belongs to the RLP family. As to quaternary structure, interacts with thioredoxin-like protein CITRX.

It localises to the cell membrane. Its function is as follows. Involved in plant defense. Confers resistance to the fungal pathogen C.fulvum through recognition of the AVR9 elicitor protein. This chain is Receptor-like protein Cf-9, found in Solanum pimpinellifolium (Currant tomato).